Consider the following 357-residue polypeptide: Glutamyl endopeptidase (357 aa).

The signal sequence occupies residues 1 to 29 (MKGKFLKVSSLFVATLTTATLVSSPAANA). Positions 30 to 68 (LSSKAMDNHPQQTQTDKQQTPKIQKGGNLKPLEQRERAN) are excised as a propeptide. The tract at residues 33–58 (KAMDNHPQQTQTDKQQTPKIQKGGNL) is disordered. The segment covering 40-54 (QQTQTDKQQTPKIQK) has biased composition (low complexity). Catalysis depends on charge relay system residues His-119, Asp-161, and Ser-237. The interval 282-357 (NFANDDHPNN…NNNSDNPDAA (76 aa)) is disordered. 18 tandem repeats follow at residues 289-291 (PNN), 292-294 (PDN), 295-297 (PDN), 298-300 (PNN), 301-303 (PDN), 304-306 (PNN), 307-309 (PDN), 310-312 (PNN), 313-315 (PDN), 316-318 (PDN), 319-321 (PNN), 322-324 (PDN), 325-327 (PNN), 328-330 (PDN), 331-333 (PNN), 337-339 (PNN), 340-342 (PNN), and 343-345 (PDN). The 18 X 3 AA repeats of P-[DN]-N stretch occupies residues 289–345 (PNNPDNPDNPNNPDNPNNPDNPNNPDNPDNPNNPDNPNNPDNPNNPDQPNNPNNPDN). Residues 291 to 357 (NPDNPDNPNN…NNNSDNPDAA (67 aa)) are compositionally biased toward low complexity.

It belongs to the peptidase S1B family. In terms of processing, proteolytically cleaved by aureolysin (aur). This cleavage leads to the activation of SspA.

It is found in the secreted. The catalysed reaction is Preferential cleavage: Glu-|-Xaa, Asp-|-Xaa.. Its function is as follows. Preferentially cleaves peptide bonds on the carboxyl-terminal side of aspartate and glutamate. Along with other extracellular proteases it is involved in colonization and infection of human tissues. Required for proteolytic maturation of thiol protease SspB and inactivation of SspC, an inhibitor of SspB. It is the most important protease for degradation of fibronectin-binding protein (FnBP) and surface protein A, which are involved in adherence to host cells. May also protect bacteria against host defense mechanism by cleaving the immunoglobulin classes IgG, IgA and IgM. May be involved in the stability of secreted lipases. The chain is Glutamyl endopeptidase (sspA) from Staphylococcus aureus (strain MRSA252).